The chain runs to 445 residues: Phosphoglucosamine mutase (445 aa).

Ser-102 serves as the catalytic Phosphoserine intermediate. 4 residues coordinate Mg(2+): Ser-102, Asp-241, Asp-243, and Asp-245. Ser-102 bears the Phosphoserine mark.

This sequence belongs to the phosphohexose mutase family. Mg(2+) serves as cofactor. Activated by phosphorylation.

It catalyses the reaction alpha-D-glucosamine 1-phosphate = D-glucosamine 6-phosphate. In terms of biological role, catalyzes the conversion of glucosamine-6-phosphate to glucosamine-1-phosphate. The chain is Phosphoglucosamine mutase from Escherichia fergusonii (strain ATCC 35469 / DSM 13698 / CCUG 18766 / IAM 14443 / JCM 21226 / LMG 7866 / NBRC 102419 / NCTC 12128 / CDC 0568-73).